We begin with the raw amino-acid sequence, 545 residues long: Capsular polysaccharide phosphotransferase SacB (545 aa).

This sequence belongs to the stealth family.

May be the polymerase that links individual UDP-N-acetyl-D-mannosamine monomers. In serotype A the capsule is composed of repeated units of (alpha 1-6)-linked N-acetyl-D-mannosamine-1-phosphate. The protein is Capsular polysaccharide phosphotransferase SacB (sacB) of Neisseria meningitidis serogroup A.